A 362-amino-acid chain; its full sequence is Glutamate--cysteine ligase (362 aa).

This sequence belongs to the glutamate--cysteine ligase type 2 family. YbdK subfamily.

It carries out the reaction L-cysteine + L-glutamate + ATP = gamma-L-glutamyl-L-cysteine + ADP + phosphate + H(+). In terms of biological role, catalyzes the synthesis of gamma-glutamylcysteine (gamma-GC), the main low-molecular-weight thiol compound instead of glutathione in halophilic archaea. The polypeptide is Glutamate--cysteine ligase (Natronomonas pharaonis (strain ATCC 35678 / DSM 2160 / CIP 103997 / JCM 8858 / NBRC 14720 / NCIMB 2260 / Gabara) (Halobacterium pharaonis)).